Reading from the N-terminus, the 124-residue chain is Small ribosomal subunit protein uS12 (124 aa).

Residues 1 to 22 are disordered; the sequence is MATINQLVRKPRKRKVAKSDVP. Position 89 is a 3-methylthioaspartic acid (Asp89). Positions 101 to 124 are disordered; that stretch reads TLDTQGVQNRKQGRSKYGAKRPKS. A compositionally biased stretch (basic residues) spans 111 to 124; the sequence is KQGRSKYGAKRPKS.

It belongs to the universal ribosomal protein uS12 family. Part of the 30S ribosomal subunit. Contacts proteins S8 and S17. May interact with IF1 in the 30S initiation complex.

With S4 and S5 plays an important role in translational accuracy. Its function is as follows. Interacts with and stabilizes bases of the 16S rRNA that are involved in tRNA selection in the A site and with the mRNA backbone. Located at the interface of the 30S and 50S subunits, it traverses the body of the 30S subunit contacting proteins on the other side and probably holding the rRNA structure together. The combined cluster of proteins S8, S12 and S17 appears to hold together the shoulder and platform of the 30S subunit. In Marinobacter nauticus (strain ATCC 700491 / DSM 11845 / VT8) (Marinobacter aquaeolei), this protein is Small ribosomal subunit protein uS12.